Reading from the N-terminus, the 67-residue chain is Large ribosomal subunit protein bL35 (67 aa).

The span at methionine 1–valine 16 shows a compositional bias: basic residues. Residues methionine 1–valine 22 are disordered.

Belongs to the bacterial ribosomal protein bL35 family.

This is Large ribosomal subunit protein bL35 from Methylibium petroleiphilum (strain ATCC BAA-1232 / LMG 22953 / PM1).